The chain runs to 82 residues: Large ribosomal subunit protein bL27 (82 aa).

Residues methionine 1–glycine 54 are disordered.

It belongs to the bacterial ribosomal protein bL27 family.

The sequence is that of Large ribosomal subunit protein bL27 from Chlamydia caviae (strain ATCC VR-813 / DSM 19441 / 03DC25 / GPIC) (Chlamydophila caviae).